A 95-amino-acid polypeptide reads, in one-letter code: MIIEKSINAKQLSLKLWDSFVKEKQVSFVAEGDATVKLVSLVELLKRRCNEQKIPFNQTIELIPSEEQSSDTLIHGNRRSLPQLKIDLQILEHDS.

This is an uncharacterized protein from Schizosaccharomyces pombe (strain 972 / ATCC 24843) (Fission yeast).